Here is a 221-residue protein sequence, read N- to C-terminus: Imidazoleglycerol-phosphate dehydratase (221 aa).

Belongs to the imidazoleglycerol-phosphate dehydratase family.

The enzyme catalyses D-erythro-1-(imidazol-4-yl)glycerol 3-phosphate = 3-(imidazol-4-yl)-2-oxopropyl phosphate + H2O. The protein operates within amino-acid biosynthesis; L-histidine biosynthesis; L-histidine from 5-phospho-alpha-D-ribose 1-diphosphate: step 6/9. This is Imidazoleglycerol-phosphate dehydratase (HIS3) from Kluyveromyces marxianus (Yeast).